Consider the following 151-residue polypeptide: Probable desiccation-related protein LEA14 (151 aa).

This sequence belongs to the LEA type 2 family.

In Arabidopsis thaliana (Mouse-ear cress), this protein is Probable desiccation-related protein LEA14 (LEA14).